The chain runs to 647 residues: Threonine--tRNA ligase (647 aa).

In terms of domain architecture, TGS spans Met1–Thr61. The tract at residues Asp242–Pro540 is catalytic. 3 residues coordinate Zn(2+): Cys336, His387, and His517.

It belongs to the class-II aminoacyl-tRNA synthetase family. In terms of assembly, homodimer. Zn(2+) is required as a cofactor.

The protein localises to the cytoplasm. The catalysed reaction is tRNA(Thr) + L-threonine + ATP = L-threonyl-tRNA(Thr) + AMP + diphosphate + H(+). Functionally, catalyzes the attachment of threonine to tRNA(Thr) in a two-step reaction: L-threonine is first activated by ATP to form Thr-AMP and then transferred to the acceptor end of tRNA(Thr). Also edits incorrectly charged L-seryl-tRNA(Thr). In Streptococcus pneumoniae serotype 19F (strain G54), this protein is Threonine--tRNA ligase.